Here is a 117-residue protein sequence, read N- to C-terminus: Immunity protein BC_0921 (117 aa).

Probably interacts with cognate toxin BC_0920 but not with other non-cognate toxins. The interaction inhibits the toxic activity of BC_0920.

It is found in the cytoplasm. Immunity component of an LXG toxin-immunity module. Neutralizes the RNase activity of cognate toxin BC_0920. Probably does not have immunity protein activity on other toxins with the LXG domain. In Bacillus cereus (strain ATCC 14579 / DSM 31 / CCUG 7414 / JCM 2152 / NBRC 15305 / NCIMB 9373 / NCTC 2599 / NRRL B-3711), this protein is Immunity protein BC_0921.